The sequence spans 297 residues: MRLVVATRGSKLSMLQTEELLAQIKAVEPSIEFEIKIVKTTGDEVQDKPLYQIGVKGIFEKEVNLAVLRGEADVAVHSLKDLPSELSPGLVLAGFSKRAPPFDAVVSTAGYVLETLPRGALVGTSSVRRAEFVKAIRPDVRVEPLRGNVDTRINKILQGKYDAAIMAVAGIYRLYGASPPIKLAVLRPEVLPPPPGQGIVAAVVREADSWLIDLLKKASDPKASLEAIAEREFLKAVGAGCHVAIGGVAFARNDTVEFIAGYASGGRKYIVRVVGDDPVEVGRRAAEEIRKFKDGDV.

Cysteine 241 is modified (S-(dipyrrolylmethanemethyl)cysteine).

This sequence belongs to the HMBS family. Requires dipyrromethane as cofactor.

It carries out the reaction 4 porphobilinogen + H2O = hydroxymethylbilane + 4 NH4(+). It functions in the pathway porphyrin-containing compound metabolism; protoporphyrin-IX biosynthesis; coproporphyrinogen-III from 5-aminolevulinate: step 2/4. Functionally, tetrapolymerization of the monopyrrole PBG into the hydroxymethylbilane pre-uroporphyrinogen in several discrete steps. The protein is Probable porphobilinogen deaminase of Pyrobaculum arsenaticum (strain DSM 13514 / JCM 11321 / PZ6).